The chain runs to 245 residues: Bis(5'-nucleosyl)-tetraphosphatase PrpE [asymmetrical] (245 aa).

The protein belongs to the PrpE family. Requires Ni(2+) as cofactor.

It carries out the reaction P(1),P(4)-bis(5'-guanosyl) tetraphosphate + H2O = GMP + GTP + 2 H(+). In terms of biological role, asymmetrically hydrolyzes Ap4p to yield AMP and ATP. The sequence is that of Bis(5'-nucleosyl)-tetraphosphatase PrpE [asymmetrical] from Geobacillus sp. (strain WCH70).